Here is a 261-residue protein sequence, read N- to C-terminus: Transmembrane and immunoglobulin domain-containing protein 1 (261 aa).

A signal peptide spans 1–26 (MVWKITGPLQACQLLLVVLSLPQGRT). The region spanning 27–113 (SSVLTVNGRT…LQRDQTVSVT (87 aa)) is the Ig-like C2-type 1 domain. The Extracellular portion of the chain corresponds to 27–215 (SSVLTVNGRT…DFHLLVKDKV (189 aa)). A disulfide bridge connects residues C53 and C102. N-linked (GlcNAc...) asparagine glycans are attached at residues N57, N82, N92, N117, N157, and N189. Positions 121 to 206 (PPLLSGNGFQ…SSSLKMETMD (86 aa)) constitute an Ig-like C2-type 2 domain. C142 and C194 form a disulfide bridge. The helical transmembrane segment at 216 to 236 (FVMPAEPIIAACVVVVLTMAF) threads the bilayer. Topologically, residues 237–261 (ALFSRRKRIMKLCGKKNDPNSETAL) are cytoplasmic.

In terms of assembly, homodimer. In terms of processing, N-glycosylated.

Its subcellular location is the cell membrane. It is found in the cytoplasm. In terms of biological role, may control cell-cell adhesion, cell migration and proliferation, cell morphology, and protects renal epithelial cells from oxidative cell injury to promote cell survival. This Mus musculus (Mouse) protein is Transmembrane and immunoglobulin domain-containing protein 1.